The sequence spans 254 residues: Proteasome subunit alpha type-7 (254 aa).

Serine 136 is a glycosylation site (O-linked (GlcNAc) serine). Tyrosine 159 carries the phosphotyrosine modification. At lysine 233 the chain carries N6-acetyllysine.

Belongs to the peptidase T1A family. As to quaternary structure, the 26S proteasome consists of a 20S proteasome core and two 19S regulatory subunits. The 20S proteasome core is a barrel-shaped complex made of 28 subunits that are arranged in four stacked rings. The two outer rings are each formed by seven alpha subunits, and the two inner rings are formed by seven beta subunits. The proteolytic activity is exerted by three beta-subunits PSMB5, PSMB6 and PSMB7. PSMA7 interacts directly with the PSMG1-PSMG2 heterodimer which promotes 20S proteasome assembly. Interacts with HIF1A. Interacts with RAB7A. Interacts with PRKN. Interacts with ABL1 and ABL2. Interacts with EMAP2. Interacts with MAVS. In terms of tissue distribution, ubiquitous.

It is found in the cytoplasm. It localises to the nucleus. Component of the 20S core proteasome complex involved in the proteolytic degradation of most intracellular proteins. This complex plays numerous essential roles within the cell by associating with different regulatory particles. Associated with two 19S regulatory particles, forms the 26S proteasome and thus participates in the ATP-dependent degradation of ubiquitinated proteins. The 26S proteasome plays a key role in the maintenance of protein homeostasis by removing misfolded or damaged proteins that could impair cellular functions, and by removing proteins whose functions are no longer required. Associated with the PA200 or PA28, the 20S proteasome mediates ubiquitin-independent protein degradation. This type of proteolysis is required in several pathways including spermatogenesis (20S-PA200 complex) or generation of a subset of MHC class I-presented antigenic peptides (20S-PA28 complex). Inhibits the transactivation function of HIF-1A under both normoxic and hypoxia-mimicking conditions. The interaction with EMAP2 increases the proteasome-mediated HIF-1A degradation under the hypoxic conditions. Plays a role in hepatitis C virus internal ribosome entry site-mediated translation. Mediates nuclear translocation of the androgen receptor (AR) and thereby enhances androgen-mediated transactivation. Promotes MAVS degradation and thereby negatively regulates MAVS-mediated innate immune response. The sequence is that of Proteasome subunit alpha type-7 (Psma7) from Rattus norvegicus (Rat).